The chain runs to 642 residues: 1,4-alpha-glucan branching enzyme GlgB (642 aa).

Catalysis depends on aspartate 304, which acts as the Nucleophile. Catalysis depends on glutamate 355, which acts as the Proton donor.

The protein belongs to the glycosyl hydrolase 13 family. GlgB subfamily. In terms of assembly, monomer.

It carries out the reaction Transfers a segment of a (1-&gt;4)-alpha-D-glucan chain to a primary hydroxy group in a similar glucan chain.. The protein operates within glycan biosynthesis; glycogen biosynthesis. Functionally, catalyzes the formation of the alpha-1,6-glucosidic linkages in glycogen by scission of a 1,4-alpha-linked oligosaccharide from growing alpha-1,4-glucan chains and the subsequent attachment of the oligosaccharide to the alpha-1,6 position. In Streptococcus pneumoniae serotype 4 (strain ATCC BAA-334 / TIGR4), this protein is 1,4-alpha-glucan branching enzyme GlgB.